The sequence spans 243 residues: Small ribosomal subunit protein uS3 (243 aa).

In terms of domain architecture, KH type-2 spans 39–107 (LRKLISKELQ…KIKLNIKEIH (69 aa)). The disordered stretch occupies residues 212–243 (VAKSPAEPATTAPTPAPERRERQPRRNSNASA).

Belongs to the universal ribosomal protein uS3 family. In terms of assembly, part of the 30S ribosomal subunit. Forms a tight complex with proteins S10 and S14.

In terms of biological role, binds the lower part of the 30S subunit head. Binds mRNA in the 70S ribosome, positioning it for translation. The chain is Small ribosomal subunit protein uS3 from Chloroflexus aurantiacus (strain ATCC 29364 / DSM 637 / Y-400-fl).